The chain runs to 517 residues: Probable G-protein coupled receptor Mth-like 4 (517 aa).

An N-terminal signal peptide occupies residues 1–18 (MRILLIAVLFLLMPKSNA). Residues 19–212 (EIPGCDFFDT…LSSEHSRTWK (194 aa)) are Extracellular-facing. 5 disulfide bridges follow: Cys23-Cys77, Cys79-Cys84, Cys88-Cys183, Cys89-Cys100, and Cys145-Cys201. Asn39 carries N-linked (GlcNAc...) asparagine glycosylation. 2 N-linked (GlcNAc...) asparagine glycosylation sites follow: Asn117 and Asn165. Residues 213–233 (TVAIVISLICIILTISVYLYV) traverse the membrane as a helical segment. At 234–242 (EKLRNLHGK) the chain is on the cytoplasmic side. Residues 243 to 263 (CFICYLASLFLGYFFLVLNVW) form a helical membrane-spanning segment. Residues 264–272 (KYSSGFCVT) lie on the Extracellular side of the membrane. The helical transmembrane segment at 273–293 (AGFLGYFSVMAAFFWLSVIGI) threads the bilayer. Over 294-319 (HLRIKFSLASNCLHRLLPENPFRAYN) the chain is Cytoplasmic. A helical membrane pass occupies residues 320 to 340 (LYAWGIPLIMTAITYTADQVV). Residues 341 to 363 (KNEKLRPRVGVGKNCWIYTGDMT) are Extracellular-facing. Residues 364 to 384 (VMIYFYGPMLLLIAFNIIMFV) form a helical membrane-spanning segment. Topologically, residues 385–414 (LSAIYIYNIKKNVKGLVHKQQTNQQINDQQ) are cytoplasmic. Residues 415-435 (MFAIFLRLFILMGLSWSFEIL) form a helical membrane-spanning segment. Over 436–459 (SFLLTKQQAWARALMVADYFNWSQ) the chain is Extracellular. The N-linked (GlcNAc...) asparagine glycan is linked to Asn456. The chain crosses the membrane as a helical span at residues 460–480 (GTIIFVLFILKPSILKLIIAG). The Cytoplasmic portion of the chain corresponds to 481 to 517 (GRQNLPGSHHNSRSKAARYNSTHTACEGSIADPNAYC).

Belongs to the G-protein coupled receptor 2 family. Mth subfamily.

The protein localises to the cell membrane. In Drosophila melanogaster (Fruit fly), this protein is Probable G-protein coupled receptor Mth-like 4 (mthl4).